We begin with the raw amino-acid sequence, 1386 residues long: Pleckstrin homology domain-containing family G member 2 (1386 aa).

Disordered stretches follow at residues 1 to 21 (MPEG…GCGR) and 36 to 82 (TAPA…PLPG). 2 stretches are compositionally biased toward low complexity: residues 8-17 (LSLSKPSPSL) and 45-62 (SPRG…GSEG). Position 90 is a phosphoserine (serine 90). The DH domain occupies 102 to 283 (RLERVAREIV…TAVAWYINDM (182 aa)). Residues 313–411 (ELVLEGAFRG…WIHCLQRLFF (99 aa)) form the PH domain. 5 disordered regions span residues 436–540 (KSKP…PSGT), 554–612 (GLRD…PSPL), 701–739 (EPAE…EEGV), 790–815 (ILED…RTAS), and 829–859 (QQMQ…SPCL). Threonine 445 bears the Phosphothreonine mark. Phosphoserine occurs at positions 450 and 469. Residues 592–603 (SEEEEEEEEGLE) are compositionally biased toward acidic residues. Serine 911 and serine 1049 each carry phosphoserine. Disordered regions lie at residues 1037–1099 (PVPK…PLPC) and 1162–1191 (TSPK…DTQV). Polar residues-rich tracts occupy residues 1048 to 1059 (ESPTNIPLTKQG) and 1073 to 1086 (QPIQ…SSLD). Threonine 1257 carries the post-translational modification Phosphothreonine. 2 positions are modified to phosphoserine: serine 1261 and serine 1310. Disordered stretches follow at residues 1291 to 1333 (ARRQ…ARRL) and 1367 to 1386 (TQES…PFHM). A compositionally biased stretch (low complexity) spans 1301 to 1317 (PAASRGSWSSAPTSRAS). Pro residues predominate over residues 1318–1330 (SPPPQPQPPPPPA).

In terms of biological role, may be a transforming oncogene with exchange activity for CDC42. May be a guanine-nucleotide exchange factor (GEF) for RAC1 and CDC42. Activated by the binding to subunits beta and gamma of the heterotrimeric guanine nucleotide-binding protein (G protein). Involved in the regulation of actin polymerization. The chain is Pleckstrin homology domain-containing family G member 2 (PLEKHG2) from Homo sapiens (Human).